The chain runs to 138 residues: MLIPKRVKFRRQHRPNRSGMSKGGNRVTFGDYGLQALEPTYITNRQIEAARIAINRHIKRGGKVWINIFPDRPLTQKPLGVRMGSGKGPVEKWVANVKPGRILFEMSYPDEQAAMEALRRAGAKLPCKVRIVKKEDQF.

Residues 1–16 (MLIPKRVKFRRQHRPN) show a composition bias toward basic residues. The tract at residues 1 to 25 (MLIPKRVKFRRQHRPNRSGMSKGGN) is disordered.

The protein belongs to the universal ribosomal protein uL16 family. As to quaternary structure, part of the 50S ribosomal subunit.

Functionally, binds 23S rRNA and is also seen to make contacts with the A and possibly P site tRNAs. The chain is Large ribosomal subunit protein uL16 from Corynebacterium urealyticum (strain ATCC 43042 / DSM 7109).